The sequence spans 510 residues: NAD(P)H-quinone oxidoreductase subunit 2 A, chloroplastic (510 aa).

Helical transmembrane passes span 24–44 (LLLF…GLIL), 57–77 (IPWL…ALLF), 99–119 (IFQF…VEYI), 124–144 (MAIT…MFLC), 149–169 (LITI…LSGY), 183–203 (YLLM…WLYG), 227–247 (PGIS…LSPA), 295–315 (WHLL…LIAI), 323–343 (MLAY…IVGD), 354–374 (YMLF…SFGL), 395–415 (ALSL…AGFF), 418–438 (LHLF…IGLL), and 484–504 (MIVC…IIAI).

Belongs to the complex I subunit 2 family. As to quaternary structure, NDH is composed of at least 16 different subunits, 5 of which are encoded in the nucleus.

It is found in the plastid. Its subcellular location is the chloroplast thylakoid membrane. The enzyme catalyses a plastoquinone + NADH + (n+1) H(+)(in) = a plastoquinol + NAD(+) + n H(+)(out). It catalyses the reaction a plastoquinone + NADPH + (n+1) H(+)(in) = a plastoquinol + NADP(+) + n H(+)(out). In terms of biological role, NDH shuttles electrons from NAD(P)H:plastoquinone, via FMN and iron-sulfur (Fe-S) centers, to quinones in the photosynthetic chain and possibly in a chloroplast respiratory chain. The immediate electron acceptor for the enzyme in this species is believed to be plastoquinone. Couples the redox reaction to proton translocation, and thus conserves the redox energy in a proton gradient. The sequence is that of NAD(P)H-quinone oxidoreductase subunit 2 A, chloroplastic from Vitis vinifera (Grape).